The chain runs to 577 residues: Sulfite reductase [NADPH] hemoprotein beta-component 2 (577 aa).

[4Fe-4S] cluster contacts are provided by cysteine 441, cysteine 447, cysteine 486, and cysteine 490. Cysteine 490 is a siroheme binding site.

It belongs to the nitrite and sulfite reductase 4Fe-4S domain family. As to quaternary structure, alpha(8)-beta(8). The alpha component is a flavoprotein, the beta component is a hemoprotein. Requires siroheme as cofactor. [4Fe-4S] cluster is required as a cofactor.

It catalyses the reaction hydrogen sulfide + 3 NADP(+) + 3 H2O = sulfite + 3 NADPH + 4 H(+). The protein operates within sulfur metabolism; hydrogen sulfide biosynthesis; hydrogen sulfide from sulfite (NADPH route): step 1/1. Its function is as follows. Component of the sulfite reductase complex that catalyzes the 6-electron reduction of sulfite to sulfide. This is one of several activities required for the biosynthesis of L-cysteine from sulfate. In Pectobacterium carotovorum subsp. carotovorum (strain PC1), this protein is Sulfite reductase [NADPH] hemoprotein beta-component 2.